The sequence spans 774 residues: Two pore channel protein 2 (774 aa).

The Cytoplasmic portion of the chain corresponds to 1–92 (MEEEPLLAGS…GSLRLYRWYY (92 aa)). Residues 93–113 (SNLCQWGLGLTIAVVLALAFI) traverse the membrane as a helical segment. The Extracellular segment spans residues 114 to 140 (ERPSSLTYTSDIRVKPKPWEPPCGMTE). The chain crosses the membrane as a helical span at residues 141–161 (GIEIVCLCIFILDVTAKGYLI). Over 162 to 170 (GWEEFRMNK) the chain is Cytoplasmic. A helical transmembrane segment spans residues 171–191 (WLLAYLIVITASVIDWMLSIS). Topologically, residues 192–197 (MLCDEN) are extracellular. A helical transmembrane segment spans residues 198–218 (LRVRRLIRPFFLLQNSSLMKK). The segment at 217 to 221 (KKTLK) is interaction with phosphatidylinositol 3,5-bisphosphate. Topologically, residues 219–232 (TLKCIKRTLPEIAS) are cytoplasmic. Residues 233-253 (VILLLALHICLFTMIGMLIFA) form a helical membrane-spanning segment. Residues 254–267 (KSDDPKQNGEWQTY) lie on the Extracellular side of the membrane. The helical; Pore-forming intramembrane region spans 268–292 (FRNLPKALSSLLVLLTTANNPDVMI). Residues 293 to 302 (PAYSLNRGYS) are Extracellular-facing. The chain crosses the membrane as a helical span at residues 303-323 (IFFILFSVFGTYLLMNLMTAI). Over 324-452 (IYNQFRGYLL…YVYSHYYISV (129 aa)) the chain is Cytoplasmic. The helical transmembrane segment at 453 to 475 (LGNAVALANVICICTVLVLNAEK) threads the bilayer. Residues 476-486 (SASEKNYFYME) are Extracellular-facing. A helical membrane pass occupies residues 487–507 (IINCIFILYYLIEMLLKIVAF). Over 508 to 518 (GWKGYLSYRNN) the chain is Cytoplasmic. The chain crosses the membrane as a helical span at residues 519–539 (IFDGFLTVLLLAIQIVIFITF). Residues 540–564 (KIPYVDVDPVPRHVMALWEMIRLVN) are Extracellular-facing. Residues 565–585 (MLIVFRFLRIIPEIKLMAVVA) form a helical membrane-spanning segment. Residues 586–596 (STIVDLVKNLR) lie on the Cytoplasmic side of the membrane. Residues 597 to 617 (AFAGILLVVYYMFAVLGIWLF) traverse the membrane as a helical segment. Residues 618-658 (QGAISPPSNMSLVSNSSLENITGPYSMECGTFEQLEYWPNN) are Extracellular-facing. Asn-626, Asn-632, and Asn-637 each carry an N-linked (GlcNAc...) asparagine glycan. Positions 659-681 (FDDFASSLILLYNIMVVNNWHVF) form an intramembrane region, helical; Pore-forming. The Extracellular segment spans residues 682–696 (TDAYARYTTDWSLVY). A helical transmembrane segment spans residues 697 to 717 (FVVWWLTSSVMWVNLFVALIL). At 718–774 (ENFTYKWDRSNGLSVEDVERIAYQSTVQLMFKEHVKEPTEEELLAQLHQHPHLHLSW) the chain is on the cytoplasmic side.

This sequence belongs to the calcium channel alpha-1 subunit (TC 1.A.1.11) family. Two pore calcium channel subfamily. Homodimer. Post-translationally, N-glycosylated.

The protein resides in the late endosome membrane. It is found in the lysosome membrane. It catalyses the reaction Na(+)(in) = Na(+)(out). The enzyme catalyses Ca(2+)(in) = Ca(2+)(out). Functionally, intracellular channel initially characterized as a non-selective Ca(2+)-permeable channel activated by NAADP (nicotinic acid adenine dinucleotide phosphate), it is also a highly-selective Na(+) channel activated directly by PI(3,5)P2 (phosphatidylinositol 3,5-bisphosphate). Localizes to the lysosomal and late endosome membranes where it regulates organellar membrane excitability, membrane trafficking, and pH homeostasis. This Danio rerio (Zebrafish) protein is Two pore channel protein 2 (tpcn2).